Here is a 288-residue protein sequence, read N- to C-terminus: Small ribosomal subunit protein uS9m (288 aa).

Residues 269 to 288 (VERKKPGKKKARKMPTWVKR) are disordered.

Belongs to the universal ribosomal protein uS9 family.

The protein resides in the mitochondrion. In Candida glabrata (strain ATCC 2001 / BCRC 20586 / JCM 3761 / NBRC 0622 / NRRL Y-65 / CBS 138) (Yeast), this protein is Small ribosomal subunit protein uS9m (MRPS9).